The primary structure comprises 89 residues: Pigment-dispersing hormone peptides (89 aa).

Residues 1-22 form the signal peptide; it reads MTAMAVSGKLLTALVLSTYILG. Alanine 86 carries the alanine amide modification.

This sequence belongs to the arthropod PDH family.

It localises to the secreted. In terms of biological role, capable of inducing pigment dispersion in the chromatophores of the fiddler crab Uca pugilator. The chain is Pigment-dispersing hormone peptides from Romalea microptera (Eastern lubber grasshopper).